Consider the following 77-residue polypeptide: MGRSFYHFLMTYRDPKLTDQKTEFANNAYRDHSFPKQTRNYHILCDYLEFNAPYLPGMSIFDELWEAYLLDEEKNKH.

Belongs to the UPF0346 family.

This is UPF0346 protein lin1971 from Listeria innocua serovar 6a (strain ATCC BAA-680 / CLIP 11262).